The sequence spans 398 residues: Deoxyguanosinetriphosphate triphosphohydrolase-like protein (398 aa).

The HD domain maps to 68 to 215; sequence RLTHTLEVAQ…AAISDDIAYD (148 aa).

It belongs to the dGTPase family. Type 2 subfamily.

This is Deoxyguanosinetriphosphate triphosphohydrolase-like protein from Azorhizobium caulinodans (strain ATCC 43989 / DSM 5975 / JCM 20966 / LMG 6465 / NBRC 14845 / NCIMB 13405 / ORS 571).